The sequence spans 301 residues: tRNA dimethylallyltransferase 1 (301 aa).

10–17 (GPTASGKT) contributes to the ATP binding site. 12–17 (TASGKT) lines the substrate pocket. An interaction with substrate tRNA region spans residues 35–38 (DSRQ).

Belongs to the IPP transferase family. As to quaternary structure, monomer. Mg(2+) serves as cofactor.

The catalysed reaction is adenosine(37) in tRNA + dimethylallyl diphosphate = N(6)-dimethylallyladenosine(37) in tRNA + diphosphate. Catalyzes the transfer of a dimethylallyl group onto the adenine at position 37 in tRNAs that read codons beginning with uridine, leading to the formation of N6-(dimethylallyl)adenosine (i(6)A). The chain is tRNA dimethylallyltransferase 1 from Geotalea uraniireducens (strain Rf4) (Geobacter uraniireducens).